The sequence spans 193 residues: Chaperone protein TorD (193 aa).

This sequence belongs to the TorD/DmsD family. TorD subfamily.

The protein resides in the cytoplasm. Involved in the biogenesis of TorA. Acts on TorA before the insertion of the molybdenum cofactor and, as a result, probably favors a conformation of the apoenzyme that is competent for acquiring the cofactor. The chain is Chaperone protein TorD from Actinobacillus succinogenes (strain ATCC 55618 / DSM 22257 / CCUG 43843 / 130Z).